Reading from the N-terminus, the 188-residue chain is Elongation factor P (188 aa).

The protein belongs to the elongation factor P family.

It is found in the cytoplasm. Its pathway is protein biosynthesis; polypeptide chain elongation. Functionally, involved in peptide bond synthesis. Stimulates efficient translation and peptide-bond synthesis on native or reconstituted 70S ribosomes in vitro. Probably functions indirectly by altering the affinity of the ribosome for aminoacyl-tRNA, thus increasing their reactivity as acceptors for peptidyl transferase. The chain is Elongation factor P from Bradyrhizobium diazoefficiens (strain JCM 10833 / BCRC 13528 / IAM 13628 / NBRC 14792 / USDA 110).